Consider the following 602-residue polypeptide: MTDISVSKIRNFCIIAHIDHGKSTLADRLLQDTGTVKQRDMQDQFLDSMDLERERGITIKLQAARMKYKAEDSQEYILNLIDTPGHVDFSYEVSRSLQACEGALLVVDASQGVEAQTLANVYLALENNLEIIPVLNKVDLPGADANKIKQEIEEVIGLDTSNAINCSAKTGEGIEDILEAVVSRIPHPQNEIKSPTRALIFDSYYDPYRGVIVYFRVISGSINKRDKILLMASKKHYELDEIGIMAPDEKQVDELHAGEVGYLAASIKSVADARVGDTITLFNSAAKEPLPGYKTANPMVFCGLFPTDADQYPDLRESLEKLQLSDAALKYEPETSSAMGFGFRCGFLGLLHMEIVQERLEREYDLDLIVTAPSVIYKINLNDKEQIFIDNPSTIPDPQSRESIEEPYVKMEIYSPNEFNGTLMGLCQERRGIFVDMKYITTDRVTLIYEIPLAEVVTDFFDQMKSRTQGYASMEYHLIGYRKNDLVRLDVLINSERADPLTSIVHKDKAYGIGRGLVEKLKELIPKQQFKIPIQASIGSRIIASESISALRKDVLSKCYGGDISRKKKLLKKQAKGKKRMKAMGKVDVPQEAFMAVLKLNQ.

The region spanning 7–196 (SKIRNFCIIA…HPQNEIKSPT (190 aa)) is the tr-type G domain. GTP-binding positions include 19–24 (DHGKST) and 136–139 (NKVD).

Belongs to the TRAFAC class translation factor GTPase superfamily. Classic translation factor GTPase family. LepA subfamily.

The protein resides in the cell inner membrane. It carries out the reaction GTP + H2O = GDP + phosphate + H(+). Functionally, required for accurate and efficient protein synthesis under certain stress conditions. May act as a fidelity factor of the translation reaction, by catalyzing a one-codon backward translocation of tRNAs on improperly translocated ribosomes. Back-translocation proceeds from a post-translocation (POST) complex to a pre-translocation (PRE) complex, thus giving elongation factor G a second chance to translocate the tRNAs correctly. Binds to ribosomes in a GTP-dependent manner. This Prochlorococcus marinus (strain MIT 9515) protein is Elongation factor 4.